Reading from the N-terminus, the 142-residue chain is MTRVDFYVIPSADPSARLQVACRLAEKAWRQGMQVYLHCADEAQRSELDGRLWSFRGEAFIPHSLAEEDAEAPVALGLGEPPGNHRDLLINLTLEAPGFVPNFSRVAELVVEEPAIRQAARDKFRFYREQGYPLQDHRLPRI.

The protein belongs to the DNA polymerase III chi/HolC chain family. DNA polymerase III contains a core (composed of alpha, epsilon and theta chains) that associates with a tau subunit. This core dimerizes to form the POLIII' complex. PolIII' associates with the gamma complex (composed of gamma, delta, delta', psi and chi chains) and with the beta chain to form the complete DNA polymerase III complex. Interacts directly with the psi subunit (holD). The only subunit of the DNA polymerase III holoenzyme known to interact with single-stranded DNA binding protein (SSB).

It carries out the reaction DNA(n) + a 2'-deoxyribonucleoside 5'-triphosphate = DNA(n+1) + diphosphate. In terms of biological role, part of the beta sliding clamp loading complex, which hydrolyzes ATP to load the beta clamp onto primed DNA to form the DNA replication pre-initiation complex. DNA polymerase III is a complex, multichain enzyme responsible for most of the replicative synthesis in bacteria. This DNA polymerase also exhibits 3' to 5' exonuclease activity. The polypeptide is DNA polymerase III subunit chi (Pseudomonas aeruginosa (strain ATCC 15692 / DSM 22644 / CIP 104116 / JCM 14847 / LMG 12228 / 1C / PRS 101 / PAO1)).